A 191-amino-acid polypeptide reads, in one-letter code: NF-kappa-B inhibitor-interacting Ras-like protein 2 (191 aa).

Residues 1-191 (MGKSCKVVVC…KNKGSGSLDG (191 aa)) form a small GTPase-like region. 11–18 (GQASVGKT) lines the GTP pocket. The Effector region motif lies at 35–43 (MIETQEDIY). Residues 61–65 (DTRGL) and 120–123 (NKCD) each bind GTP. Positions 169 to 191 (TQPQSKSAFPLSRKNKGSGSLDG) are disordered.

Belongs to the small GTPase superfamily. Ras family. KappaB-Ras subfamily. As to quaternary structure, interacts with both NF-kappa-B inhibitor alpha (NFKBIA) and beta (NFKBIB) in vitro. However, it probably only interacts with NFKBIB in vivo. Interacts with GFOD1. In terms of tissue distribution, widely expressed.

Its subcellular location is the cytoplasm. Atypical Ras-like protein that acts as a potent regulator of NF-kappa-B activity by preventing the degradation of NF-kappa-B inhibitor beta (NFKBIB) by most signals, explaining why NFKBIB is more resistant to degradation. May act by blocking phosphorylation of NFKBIB and nuclear localization of p65/RELA NF-kappa-B subunit. It is unclear whether it acts as a GTPase. Both GTP- and GDP-bound forms block phosphorylation of NFKBIB. The chain is NF-kappa-B inhibitor-interacting Ras-like protein 2 (NKIRAS2) from Homo sapiens (Human).